Consider the following 57-residue polypeptide: Aminopeptidase A (57 aa).

The Extracellular segment spans residues 1–57 (YLTDHYFKVDLNSTVTQQRFLLDPSELAGITIMQPSDSNIEWLKQYRDDVATWLENS). A glycan (N-linked (GlcNAc...) asparagine) is linked at Asn-12.

This sequence belongs to the peptidase M1 family. Homodimer; disulfide-linked. Zn(2+) serves as cofactor.

The protein localises to the cell membrane. It catalyses the reaction Release of N-terminal glutamate (and to a lesser extent aspartate) from a peptide.. Inhibited by the aminopeptidase competitive inhibitors amastatin (Leu and acidic inhibitor), and bestatin (Leu inhibitor), by chelating agents EDTA, and 1,10-Phenanthroline, as well as by Zn(2+) ions. Substrate specificity is modulated by Ca(2+), Ba(2+), and Mn(2+) ions which enhances the enzymatic activity for cleavage of acidic residues. In terms of biological role, venom protein that cleaves N-terminal acidic residues from peptides with high potency in presence of calcium. It may have several roles in venom including alteration of blood pressure by cleaving circulating angiotensin-2, general degradation of host tissue, increase of permeability to other venom components, and/or processing of other toxins in the venom. The chain is Aminopeptidase A from Gloydius blomhoffii (Mamushi).